The primary structure comprises 66 residues: Defensin-B1 (66 aa).

Positions 1–23 (MNAHVLLLCTILFLLVHTPPVLG) are cleaved as a signal peptide. 3 disulfides stabilise this stretch: cysteine 29-cysteine 56, cysteine 36-cysteine 50, and cysteine 40-cysteine 57. The propeptide occupies 61-66 (VLMEDG).

Belongs to the beta-defensin family. Expressed at low levels in kidney, lung, and spleen.

It localises to the secreted. In terms of biological role, has bactericidal activity. May act as a ligand for C-C chemokine receptor CCR6. Positively regulates the sperm motility and bactericidal activity in a CCR6-dependent manner. Binds to CCR6 and triggers Ca2+ mobilization in the sperm which is important for its motility. The sequence is that of Defensin-B1 from Ornithorhynchus anatinus (Duckbill platypus).